Consider the following 127-residue polypeptide: F420-non-reducing hydrogenase subunit G (127 aa).

The protein belongs to the [NiFe]/[NiFeSe] hydrogenase small subunit family. In terms of assembly, the F420-non-reducing hydrogenase is composed of three subunits; MvhA, MvhD and MvhG. It forms a complex with the heterodisulfide reductase (hdr).

In terms of biological role, part of a complex that provides reducing equivalents for heterodisulfide reductase. This Methanothermus fervidus protein is F420-non-reducing hydrogenase subunit G (mvhG).